A 479-amino-acid polypeptide reads, in one-letter code: MDYHSPYFFGYVLGLVHLLGIIAALHAVFTVRTAQGAIAWAMSLFFIPYFTLIPYLVFGARSFNAYIKARRQANQEMHVAMANLNWRPWVEEALTARESQSYAALRAMPKLGRMPCLANNQVKLLIDGRATFDAIFAAIEQAREVVLVQFFIIHNDTIGKALQQLLLRKAADGVKVFVLYDRVGSHALPASYSQSLRDAGVQIHAFATRRGWFNRFQVNFRNHRKIVVVDGVTGFIGGHNVGDEYLGGNPHLSPWRDTHVQIGGPVLACLQESFAEDWYWATRQLPPLILPDAYPDNGVLCQALASGPADPQETCSLFFIEAIHSATRRVWITSPYFIPDEAVFAALRLAVLRGVDVRILIPARPDHRIVYAASSLFAFEAVRAGVRMFRYQPGFLHQKVVLVDDEVSAIGSANLDNRSFRLNFEITLLTVDRDFADQVETMLTTDFEQAREITPEDSSKTHRIQQLGMRIARLISPIL.

2 helical membrane-spanning segments follow: residues 8 to 28 and 38 to 58; these read FFGY…LHAV and IAWA…YLVF. 2 PLD phosphodiesterase domains span residues 218 to 245 and 392 to 419; these read VNFR…GDEY and QPGF…DNRS. Residues H223, K225, D230, H397, K399, and D404 contribute to the active site.

The protein belongs to the phospholipase D family. Cardiolipin synthase subfamily. ClsA sub-subfamily.

Its subcellular location is the cell inner membrane. It catalyses the reaction 2 a 1,2-diacyl-sn-glycero-3-phospho-(1'-sn-glycerol) = a cardiolipin + glycerol. Catalyzes the reversible phosphatidyl group transfer from one phosphatidylglycerol molecule to another to form cardiolipin (CL) (diphosphatidylglycerol) and glycerol. This is Cardiolipin synthase A from Pseudomonas putida (strain W619).